The chain runs to 49 residues: Large ribosomal subunit protein bL33A (49 aa).

This sequence belongs to the bacterial ribosomal protein bL33 family.

This chain is Large ribosomal subunit protein bL33A, found in Bacillus cytotoxicus (strain DSM 22905 / CIP 110041 / 391-98 / NVH 391-98).